A 331-amino-acid chain; its full sequence is Ferrochelatase (331 aa).

Positions 187 and 286 each coordinate Fe cation.

It belongs to the ferrochelatase family.

It is found in the cytoplasm. It carries out the reaction heme b + 2 H(+) = protoporphyrin IX + Fe(2+). Its pathway is porphyrin-containing compound metabolism; protoheme biosynthesis; protoheme from protoporphyrin-IX: step 1/1. Functionally, catalyzes the ferrous insertion into protoporphyrin IX. This Legionella pneumophila (strain Corby) protein is Ferrochelatase.